The chain runs to 466 residues: Gamma-aminobutyric acid permease (466 aa).

Residues 2–20 are Cytoplasmic-facing; sequence GQSSQPHELGGGLKSRHVT. The next 2 membrane-spanning stretches (helical) occupy residues 21-41 and 42-62; these read MLSI…VAIA and EAGP…VMIM. The Cytoplasmic segment spans residues 63-96; that stretch reads RMLAEMAVATPDTGSFSTYADKAIGRWAGYTIGW. A helical transmembrane segment spans residues 97–117; it reads LYWWFWVLVIPLEANIAAMIL. Position 118 (histidine 118) is a topological domain, periplasmic. The chain crosses the membrane as a helical span at residues 119–139; it reads SWVPGIPIWLFSLVITLALTG. At 140–153 the chain is on the cytoplasmic side; the sequence is SNLLSVKNYGEFEF. Residues 154–174 traverse the membrane as a helical segment; it reads WLALCKVIAILAFIFLGAVAI. The Periplasmic segment spans residues 175 to 199; it reads SGFYPYAEVSGISRLWDSGGFMPNG. The helical transmembrane segment at 200 to 220 threads the bilayer; the sequence is FGAVLSAMLITMFSFMGAEIV. Residues 221–246 lie on the Cytoplasmic side of the membrane; sequence TIAAAESDTPEKHIVRATNSVIWRIS. The helical transmembrane segment at 247 to 267 threads the bilayer; sequence IFYLCSIFVVVALIPWNMPGL. The Periplasmic segment spans residues 268–286; it reads KAVGSYRSVLELLNIPHAK. The helical transmembrane segment at 287 to 307 threads the bilayer; that stretch reads LIMDCVILLSVTSCLNSALYT. The Cytoplasmic segment spans residues 308 to 334; that stretch reads ASRMLYSLSRRGDAPAVMGKINRSKTP. Residues 335-355 form a helical membrane-spanning segment; that stretch reads YVAVLLSTGAAFLTVVVNYYA. At 356–358 the chain is on the periplasmic side; that stretch reads PAK. Residues 359–379 form a helical membrane-spanning segment; that stretch reads VFKFLIDSSGAIALLVYLVIA. At 380-402 the chain is on the cytoplasmic side; it reads VSQLRMRKILRAEGSEIRLRMWL. Residues 403–423 form a helical membrane-spanning segment; that stretch reads YPWLTWLVIGFITFVLVVMLF. Topologically, residues 424–428 are periplasmic; the sequence is RPAQQ. Residues 429-449 form a helical membrane-spanning segment; it reads LEVISTGLLAIGIICTVPIMA. Residues 450–466 lie on the Cytoplasmic side of the membrane; the sequence is RWKKLVLWQKTPVHNTR.

This sequence belongs to the amino acid-polyamine-organocation (APC) superfamily. Amino acid transporter (AAT) (TC 2.A.3.1) family. Monomer.

It is found in the cell inner membrane. The enzyme catalyses 4-aminobutanoate(in) + H(+)(in) = 4-aminobutanoate(out) + H(+)(out). It participates in amino-acid degradation; 4-aminobutanoate degradation. With respect to regulation, uptake is stimulated by ammonium sulfate and abolished by 2,4-dinitrophenol. Is affected both topologically and kinetically by phospholipid composition of the membrane. In cells lacking phosphatidylethanolamine (PE), the N-terminal hairpin is inverted relative to the membrane and the rate of GABA transport is reduced by more than 99%. Functionally, transporter for gamma-aminobutyrate (GABA). Transport is driven by the membrane potential. Can also transport a number of GABA analogs such as nipecotic acid or muscimol. This is Gamma-aminobutyric acid permease from Escherichia coli (strain K12).